The primary structure comprises 130 residues: Profilin-1 (130 aa).

This sequence belongs to the profilin family. Interacts with actin. Interacts with RHO1 (GTP-bound form).

It localises to the cytoplasm. Its subcellular location is the cytoskeleton. The protein localises to the cell projection. It is found in the phagocytic cup. The protein resides in the cytoplasmic vesicle. It localises to the phagosome. Its function is as follows. Binds to actin and affects the structure of the cytoskeleton. At high concentrations, profilin prevents the polymerization of actin, whereas it enhances it at low concentrations. By binding to PIP2, it inhibits the formation of IP3 and DG. This chain is Profilin-1, found in Entamoeba histolytica (strain ATCC 30459 / HM-1:IMSS / ABRM).